The primary structure comprises 264 residues: NAD-capped RNA hydrolase NudC (264 aa).

Arg-70 is a substrate binding site. Positions 99 and 102 each coordinate Zn(2+). Glu-112 contacts substrate. The Zn(2+) site is built by Cys-117 and Cys-120. Residue Tyr-125 participates in substrate binding. Residues 126-253 (PVICPSIIVA…TIARKLIHVT (128 aa)) enclose the Nudix hydrolase domain. The a divalent metal cation site is built by Ala-162, Glu-178, and Glu-182. Residues 163-184 (GFVEVGETFEQAVQREVFEETG) carry the Nudix box motif. 196–203 (QPWAFPNS) contacts substrate. Glu-223 is a binding site for a divalent metal cation. Residue Ala-246 coordinates substrate.

The protein belongs to the Nudix hydrolase family. NudC subfamily. Homodimer. Mg(2+) is required as a cofactor. Mn(2+) serves as cofactor. It depends on Zn(2+) as a cofactor.

The catalysed reaction is a 5'-end NAD(+)-phospho-ribonucleoside in mRNA + H2O = a 5'-end phospho-adenosine-phospho-ribonucleoside in mRNA + beta-nicotinamide D-ribonucleotide + 2 H(+). It catalyses the reaction NAD(+) + H2O = beta-nicotinamide D-ribonucleotide + AMP + 2 H(+). The enzyme catalyses NADH + H2O = reduced beta-nicotinamide D-ribonucleotide + AMP + 2 H(+). Its function is as follows. mRNA decapping enzyme that specifically removes the nicotinamide adenine dinucleotide (NAD) cap from a subset of mRNAs by hydrolyzing the diphosphate linkage to produce nicotinamide mononucleotide (NMN) and 5' monophosphate mRNA. The NAD-cap is present at the 5'-end of some mRNAs and stabilizes RNA against 5'-processing. Has preference for mRNAs with a 5'-end purine. Catalyzes the hydrolysis of a broad range of dinucleotide pyrophosphates. In Haemophilus influenzae (strain 86-028NP), this protein is NAD-capped RNA hydrolase NudC.